The following is a 55-amino-acid chain: Small integral membrane protein 27 (55 aa).

Residues 11-31 traverse the membrane as a helical segment; that stretch reads WIYSVLLLAIVLISWGCIIYA.

It is found in the membrane. The protein is Small integral membrane protein 27 of Homo sapiens (Human).